The following is a 185-amino-acid chain: Ribosome-recycling factor (185 aa).

Belongs to the RRF family.

It localises to the cytoplasm. In terms of biological role, responsible for the release of ribosomes from messenger RNA at the termination of protein biosynthesis. May increase the efficiency of translation by recycling ribosomes from one round of translation to another. The protein is Ribosome-recycling factor of Listeria innocua serovar 6a (strain ATCC BAA-680 / CLIP 11262).